The following is a 252-amino-acid chain: Transcriptional regulatory protein HptR (252 aa).

Residues 3 to 118 (KVVICDDERI…QLEVILGRLV (116 aa)) enclose the Response regulatory domain. Asp-55 carries the 4-aspartylphosphate modification. The HTH araC/xylS-type domain occupies 153 to 250 (NQIVDQIKQS…QMSPSDYCKQ (98 aa)). 2 DNA-binding regions (H-T-H motif) span residues 170 to 191 (SDLIQHIDVSESYAMRTFKDHV) and 217 to 240 (HYEIADKVGFSEYKMFSYHFKKYL).

In terms of processing, phosphorylated by HptS.

The protein resides in the cytoplasm. Its function is as follows. Member of the two-component regulatory system HptS/HptR that regulates genes involved in hexose phosphate transport system in response to changes in extracellular phosphate sources. Activates uhpT expression to facilitate glucose-6-phosphate/G6P utilization by directly binding to its promoter. Antagonizes CcpA-dependent transcription of a subset of CcpA-regulated genes involved in antibiotic susceptibility. This Staphylococcus aureus (strain MRSA252) protein is Transcriptional regulatory protein HptR (hptR).